A 108-amino-acid chain; its full sequence is Heme oxygenase (staphylobilin-producing) 2 (108 aa).

Residues 2 to 93 (FMAENRLQLQ…DDDGQQSPIL (92 aa)) enclose the ABM domain. Asn6 provides a ligand contact to Fe cation. Heme-binding positions include 21–28 (RFYNRQGI) and His76.

It belongs to the antibiotic biosynthesis monooxygenase family. Heme-degrading monooxygenase IsdG subfamily. As to quaternary structure, homodimer.

The protein resides in the cytoplasm. It carries out the reaction heme b + 5 AH2 + 4 O2 + 2 H(+) = delta-staphylobilin + Fe(2+) + formaldehyde + 5 A + 4 H2O. The catalysed reaction is heme b + 5 AH2 + 4 O2 + 2 H(+) = beta-staphylobilin + Fe(2+) + formaldehyde + 5 A + 4 H2O. Allows bacterial pathogens to use the host heme as an iron source. Catalyzes the oxidative degradation of the heme macrocyclic porphyrin ring to the oxo-bilirubin chromophore staphylobilin (a mixture of the linear tetrapyrroles 5-oxo-delta-bilirubin and 15-oxo-beta-bilirubin) in the presence of a suitable electron donor such as ascorbate or NADPH--cytochrome P450 reductase, with subsequent release of free iron. The chain is Heme oxygenase (staphylobilin-producing) 2 (isdI) from Staphylococcus aureus (strain MRSA252).